A 263-amino-acid chain; its full sequence is Putative protein JayE (263 aa).

The protein belongs to the Mu gp47/PBSX XkdT family.

The polypeptide is Putative protein JayE (jayE) (Escherichia coli (strain K12)).